Reading from the N-terminus, the 356-residue chain is Tyrosine recombinase XerS (356 aa).

A Core-binding (CB) domain is found at 16–121 (LMPWFVLEYY…ALSSLYKYLT (106 aa)). One can recognise a Tyr recombinase domain in the interval 169 to 354 (KFLDYVENEY…VNDEQKNALD (186 aa)). Active-site residues include arginine 210, lysine 234, histidine 306, arginine 309, and histidine 332. The active-site O-(3'-phospho-DNA)-tyrosine intermediate is tyrosine 341.

It belongs to the 'phage' integrase family. XerS subfamily.

The protein resides in the cytoplasm. FtsK is required for recombination. Its function is as follows. Site-specific tyrosine recombinase, which acts by catalyzing the cutting and rejoining of the recombining DNA molecules. Essential to convert dimers of the bacterial chromosome into monomers to permit their segregation at cell division. This Streptococcus thermophilus (strain ATCC BAA-491 / LMD-9) protein is Tyrosine recombinase XerS.